Consider the following 743-residue polypeptide: Threonine synthase-like 1 (743 aa).

Lysine 281 is subject to N6-acetyllysine. Lysine 351 bears the N6-(pyridoxal phosphate)lysine mark.

Belongs to the threonine synthase family. The cofactor is pyridoxal 5'-phosphate.

In Macaca fascicularis (Crab-eating macaque), this protein is Threonine synthase-like 1 (THNSL1).